A 153-amino-acid polypeptide reads, in one-letter code: Calmodulin-like protein 4 (153 aa).

EF-hand domains follow at residues 8–43, 44–79, 81–116, and 117–152; these read DQIN…LGAS, PTPG…QIKQ, DPKK…LGEK, and LTHK…PVRD.

Belongs to the calmodulin family. As to quaternary structure, interacts with MYO7B; the interaction mediates the association of CALML4 with the IMAC/intermicrovillar adhesion complex. Interacts with MYO7A.

The protein resides in the cell projection. It localises to the microvillus. In terms of biological role, as part of the intermicrovillar adhesion complex/IMAC plays a role in epithelial brush border differentiation, controlling microvilli organization and length. Acts as a light chain for MYO7B and is required for efficient targeting of the IMAC to the tips of border brush microvilli. This is Calmodulin-like protein 4 (CALML4) from Bos taurus (Bovine).